A 92-amino-acid polypeptide reads, in one-letter code: Acylphosphatase (92 aa).

Cysteine 5 and cysteine 49 form a disulfide bridge. An Acylphosphatase-like domain is found at 5–92 (CIIAWVYGRV…SGELTDFRIR (88 aa)). Catalysis depends on residues arginine 20 and asparagine 38.

It belongs to the acylphosphatase family.

It catalyses the reaction an acyl phosphate + H2O = a carboxylate + phosphate + H(+). This is Acylphosphatase from Escherichia coli O157:H7.